The chain runs to 891 residues: DNA polymerase I (891 aa).

The 5'-3' exonuclease domain maps to 1–313 (MEQPVIKEGT…LLDNTPALDN (313 aa)). Positions 314–488 (TPKKSCMIVL…RLCEYFEKGG (175 aa)) constitute a 3'-5' exonuclease domain. A polymerase region spans residues 492 to 890 (NLLSLAREIE…FIAKRWNELK (399 aa)).

This sequence belongs to the DNA polymerase type-A family. As to quaternary structure, single-chain monomer with multiple functions.

The catalysed reaction is DNA(n) + a 2'-deoxyribonucleoside 5'-triphosphate = DNA(n+1) + diphosphate. Its function is as follows. In addition to polymerase activity, this DNA polymerase exhibits 3'-5' and 5'-3' exonuclease activity. This Helicobacter pylori (strain ATCC 700392 / 26695) (Campylobacter pylori) protein is DNA polymerase I (polA).